We begin with the raw amino-acid sequence, 302 residues long: Homoserine O-acetyltransferase (302 aa).

The active-site Acyl-thioester intermediate is Cys-142. Substrate contacts are provided by Lys-163 and Ser-192. The active-site Proton acceptor is His-235. Glu-237 is a catalytic residue. Position 249 (Arg-249) interacts with substrate.

The protein belongs to the MetA family.

The protein resides in the cytoplasm. It carries out the reaction L-homoserine + acetyl-CoA = O-acetyl-L-homoserine + CoA. Its pathway is amino-acid biosynthesis; L-methionine biosynthesis via de novo pathway; O-acetyl-L-homoserine from L-homoserine: step 1/1. Its function is as follows. Transfers an acetyl group from acetyl-CoA to L-homoserine, forming acetyl-L-homoserine. This chain is Homoserine O-acetyltransferase, found in Clostridium novyi (strain NT).